The sequence spans 489 residues: Rhamnulokinase (489 aa).

ATP is bound at residue 13-17 (ASSGR). A disulfide bond links C68 and C222. Substrate contacts are provided by residues G83 and 236–238 (HDT). The Proton acceptor role is filled by D237. T259 contributes to the ATP binding site. N296 serves as a coordination point for substrate. Residue Q304 participates in ATP binding. Cysteines 353 and 370 form a disulfide. An ATP-binding site is contributed by G402. A disulfide bridge connects residues C413 and C417.

This sequence belongs to the rhamnulokinase family. In terms of assembly, monomer. The cofactor is Mg(2+).

It carries out the reaction L-rhamnulose + ATP = L-rhamnulose 1-phosphate + ADP + H(+). It participates in carbohydrate degradation; L-rhamnose degradation; glycerone phosphate from L-rhamnose: step 2/3. Functionally, involved in the catabolism of L-rhamnose (6-deoxy-L-mannose). Catalyzes the transfer of the gamma-phosphate group from ATP to the 1-hydroxyl group of L-rhamnulose to yield L-rhamnulose 1-phosphate. This is Rhamnulokinase from Escherichia coli O1:K1 / APEC.